A 102-amino-acid polypeptide reads, in one-letter code: Large ribosomal subunit protein bL21 (102 aa).

Belongs to the bacterial ribosomal protein bL21 family. In terms of assembly, part of the 50S ribosomal subunit. Contacts protein L20.

Functionally, this protein binds to 23S rRNA in the presence of protein L20. The sequence is that of Large ribosomal subunit protein bL21 from Ehrlichia canis (strain Jake).